The chain runs to 93 residues: Large ribosomal subunit protein bL31B (93 aa).

It belongs to the bacterial ribosomal protein bL31 family. Type B subfamily. In terms of assembly, part of the 50S ribosomal subunit.

In Pseudomonas syringae pv. tomato (strain ATCC BAA-871 / DC3000), this protein is Large ribosomal subunit protein bL31B.